Consider the following 66-residue polypeptide: Beta-mammal toxin Css2 (66 aa).

The region spanning 1–66 is the LCN-type CS-alpha/beta domain; the sequence is KEGYLVSKST…VWPLPNKTCN (66 aa). Intrachain disulfides connect Cys-12–Cys-65, Cys-16–Cys-41, Cys-25–Cys-46, and Cys-29–Cys-48. Asn-66 bears the Asparagine amide mark.

The protein belongs to the long (4 C-C) scorpion toxin superfamily. Sodium channel inhibitor family. Beta subfamily. Post-translationally, C-terminal amidation increases its affinity for sodium channels. In terms of tissue distribution, expressed by the venom gland.

The protein localises to the secreted. Functionally, beta toxin that binds site-4 of sodium channels (Nav) and reduces peak current (observed on Nav1.6/SCN8A (IC(50)=307 nM)), shifts the voltage of activation toward more negative potentials (observed on Nav1.6, Nav1.1 (weak), Nav1.2 (weak), and Nav1.7 (weak)), and induces resurgent currents at negative voltages following brief and strong depolarizations (observed on Nav1.6, Nav1.1 (weak), and Nav1.7 (weak)). A reduction of peak current of Nav1.5/SCN7A has been observed in another study (IC(50)=35-40 nM). This toxin is only active on mammals. It has been shown to bind phospholipids. The protein is Beta-mammal toxin Css2 of Centruroides suffusus (Durango bark scorpion).